Reading from the N-terminus, the 366-residue chain is Carbamoyl phosphate synthase small chain (366 aa).

The CPSase stretch occupies residues 1–172 (MYGILVLEDG…TYNAENEKTS (172 aa)). L-glutamine-binding residues include Ser-45, Gly-220, and Gly-222. Residues 172–363 (SCVLIDCGVK…VELGIKFKAE (192 aa)) enclose the Glutamine amidotransferase type-1 domain. Cys-247 (nucleophile) is an active-site residue. Positions 248, 251, 289, 291, and 292 each coordinate L-glutamine. Active-site residues include His-336 and Glu-338.

It belongs to the CarA family. Composed of two chains; the small (or glutamine) chain promotes the hydrolysis of glutamine to ammonia, which is used by the large (or ammonia) chain to synthesize carbamoyl phosphate. Tetramer of heterodimers (alpha,beta)4.

It catalyses the reaction hydrogencarbonate + L-glutamine + 2 ATP + H2O = carbamoyl phosphate + L-glutamate + 2 ADP + phosphate + 2 H(+). The catalysed reaction is L-glutamine + H2O = L-glutamate + NH4(+). The protein operates within amino-acid biosynthesis; L-arginine biosynthesis; carbamoyl phosphate from bicarbonate: step 1/1. Its pathway is pyrimidine metabolism; UMP biosynthesis via de novo pathway; (S)-dihydroorotate from bicarbonate: step 1/3. Its function is as follows. Small subunit of the glutamine-dependent carbamoyl phosphate synthetase (CPSase). CPSase catalyzes the formation of carbamoyl phosphate from the ammonia moiety of glutamine, carbonate, and phosphate donated by ATP, constituting the first step of 2 biosynthetic pathways, one leading to arginine and/or urea and the other to pyrimidine nucleotides. The small subunit (glutamine amidotransferase) binds and cleaves glutamine to supply the large subunit with the substrate ammonia. The polypeptide is Carbamoyl phosphate synthase small chain (Methanococcus maripaludis (strain C7 / ATCC BAA-1331)).